The chain runs to 56 residues: Large ribosomal subunit protein bL32 (56 aa).

A disordered region spans residues 1 to 26 (MAVQQNKKSRSKRGMRRSHDALSTAQ). Residues 7 to 16 (KKSRSKRGMR) show a composition bias toward basic residues.

Belongs to the bacterial ribosomal protein bL32 family.

The protein is Large ribosomal subunit protein bL32 of Shewanella amazonensis (strain ATCC BAA-1098 / SB2B).